The following is a 756-amino-acid chain: Xylosyl- and glucuronyltransferase LARGE1 (756 aa).

Over M1 to K10 the chain is Cytoplasmic. Residues F11–A31 form a helical; Signal-anchor for type II membrane protein membrane-spanning segment. Over G32–S756 the chain is Lumenal. Disordered regions lie at residues S43–S64 and Q82–T108. The segment covering P44–S58 has biased composition (polar residues). A coiled-coil region spans residues R53–R95. Residues N97, N122, and N148 are each glycosylated (N-linked (GlcNAc...) asparagine). Residues I138–R413 are xylosyltransferase activity. Mn(2+)-binding residues include D242 and D244. N272 carries an N-linked (GlcNAc...) asparagine glycan. A glucuronyltransferase activity region spans residues R414–S756. Mn(2+) is bound by residues D563 and D565.

The protein in the C-terminal section; belongs to the glycosyltransferase 49 family. It in the N-terminal section; belongs to the glycosyltransferase 8 family. In terms of assembly, interacts with DAG1 (via the N-terminal domain of alpha-DAG1); the interaction increases binding of DAG1 to laminin. Interacts with B4GAT1. It depends on Mn(2+) as a cofactor. In terms of tissue distribution, ubiquitous. Highest expression in heart, diaphragm and brain, where it is especially found in cerebral cortex, hippocampus, and trigeminal ganglion.

Its subcellular location is the golgi apparatus membrane. The enzyme catalyses 3-O-[beta-D-GlcA-(1-&gt;3)-beta-D-Xyl-(1-&gt;4)-Rib-ol-P-Rib-ol-P-3-beta-D-GalNAc-(1-&gt;3)-beta-D-GlcNAc-(1-&gt;4)-(O-6-P-alpha-D-Man)]-Thr-[protein] + UDP-alpha-D-xylose = 3-O-[alpha-D-Xyl-(1-&gt;3)-beta-D-GlcA-(1-&gt;4)-beta-D-Xyl-(1-&gt;4)-Rib-ol-P-Rib-ol-P-3-beta-D-GalNAc-(1-&gt;3)-beta-D-GlcNAc-(1-&gt;4)-(O-6-P-alpha-D-Man)]-Thr-[protein] + UDP + H(+). It catalyses the reaction 3-O-{(1-&gt;[3)-alpha-D-Xyl-(1-&gt;3)-beta-D-GlcA-(1-&gt;](n)-4)-beta-D-Xyl-(1-&gt;4)-Rib-ol-P-Rib-ol-P-3-beta-D-GalNAc-(1-&gt;3)-beta-D-GlcNAc-(1-&gt;4)-O-6-P-alpha-D-Man}-L-Thr-[protein] + UDP-alpha-D-glucuronate = 3-O-{beta-D-GlcA-(1-&gt;[3)-alpha-D-Xyl-(1-&gt;3)-beta-D-GlcA-(1-&gt;](n)-4)-beta-D-Xyl-(1-&gt;4)-Rib-ol-P-Rib-ol-P-3-beta-D-GalNAc-(1-&gt;3)-beta-D-GlcNAc-(1-&gt;4)-O-6-P-alpha-D-Man}-L-Thr-[protein] + UDP + H(+). The catalysed reaction is 3-O-{beta-D-GlcA-(1-&gt;[3)-alpha-D-Xyl-(1-&gt;3)-beta-D-GlcA-(1-&gt;](n)-4)-beta-D-Xyl-(1-&gt;4)-Rib-ol-P-Rib-ol-P-3-beta-D-GalNAc-(1-&gt;3)-beta-D-GlcNAc-(1-&gt;4)-O-6-P-alpha-D-Man}-L-Thr-[protein] + UDP-alpha-D-xylose = 3-O-{(1-&gt;[3)-alpha-D-Xyl-(1-&gt;3)-beta-D-GlcA-(1-&gt;](n+1)-4)-beta-D-Xyl-(1-&gt;4)-Rib-ol-P-Rib-ol-P-3-beta-D-GalNAc-(1-&gt;3)-beta-D-GlcNAc-(1-&gt;4)-O-6-P-alpha-D-Man}-L-Thr-[protein] + UDP + H(+). It participates in protein modification; protein glycosylation. Bifunctional glycosyltransferase with both alpha-1,3-xylosyltransferase and beta-1,3-glucuronyltransferase activities involved in the maturation of alpha-dystroglycan (DAG1) by glycosylation leading to DAG1 binding to laminin G-like domain-containing extracellular proteins with high affinity. Elongates the glucuronyl-beta-1,4-xylose-beta disaccharide primer structure initiated by B4GAT1 by adding repeating units [-3-Xylose-alpha-1,3-GlcA-beta-1-] to produce a heteropolysaccharide. Requires the phosphorylation of core M3 (O-mannosyl trisaccharide) by POMK to elongate the glucuronyl-beta-1,4-xylose-beta disaccharide primer. Plays a key role in skeletal muscle function and regeneration. In Mus musculus (Mouse), this protein is Xylosyl- and glucuronyltransferase LARGE1.